The sequence spans 738 residues: Polyphosphate kinase (738 aa).

A disordered region spans residues 1–48 (MIGNDRWVTEIETGPVTEARPDTNAREPGDRTPAAPPAATPAATTDQL). A compositionally biased stretch (basic and acidic residues) spans 19-30 (ARPDTNAREPGD). Asn-91 contacts ATP. Arg-427 and Arg-457 together coordinate Mg(2+). His-487 functions as the Phosphohistidine intermediate in the catalytic mechanism. ATP-binding residues include Tyr-520, Arg-620, and His-648.

This sequence belongs to the polyphosphate kinase 1 (PPK1) family. Mg(2+) serves as cofactor. An intermediate of this reaction is the autophosphorylated ppk in which a phosphate is covalently linked to a histidine residue through a N-P bond.

The catalysed reaction is [phosphate](n) + ATP = [phosphate](n+1) + ADP. Functionally, catalyzes the reversible transfer of the terminal phosphate of ATP to form a long-chain polyphosphate (polyP). In Mycobacterium ulcerans (strain Agy99), this protein is Polyphosphate kinase.